A 134-amino-acid chain; its full sequence is Small ribosomal subunit protein uS8c (134 aa).

The protein belongs to the universal ribosomal protein uS8 family. Part of the 30S ribosomal subunit.

It is found in the plastid. The protein localises to the chloroplast. One of the primary rRNA binding proteins, it binds directly to 16S rRNA central domain where it helps coordinate assembly of the platform of the 30S subunit. In Bigelowiella natans (Pedinomonas minutissima), this protein is Small ribosomal subunit protein uS8c (rps8).